The primary structure comprises 804 residues: DEP domain-containing protein 1A (804 aa).

The 85-residue stretch at 24 to 108 (FRVGMPLRKH…DNNQLFRFPA (85 aa)) folds into the DEP domain. Residues 282 to 322 (DYFLNLPEPLLTFEYYELFVNILVVCGYITVSDRTSGIHKI) enclose the Rho-GAP domain. S513 carries the post-translational modification Phosphoserine. The interval 592–647 (AINALQLCCLLLPPPNRRKLQLLMRMISRMSQNVDMPKLHEQIGTRSLMINTFSRC) is interaction with ZNF224. A coiled-coil region spans residues 726–760 (EQKISTSQAAIAELLENIVRSKSLSLKEKRRKLKQ).

In terms of assembly, can form dimers. Interacts with ZNF224.

The protein localises to the nucleus. Functionally, may be involved in transcriptional regulation as a transcriptional corepressor. The DEPDC1A-ZNF224 complex may play a critical role in bladder carcinogenesis by repressing the transcription of the A20 gene, leading to transport of NF-KB protein into the nucleus, resulting in suppression of apoptosis of bladder cancer cells. The sequence is that of DEP domain-containing protein 1A (Depdc1a) from Mus musculus (Mouse).